We begin with the raw amino-acid sequence, 105 residues long: Large ribosomal subunit protein bL21c (105 aa).

The protein belongs to the bacterial ribosomal protein bL21 family. Part of the 50S ribosomal subunit.

The protein localises to the plastid. It localises to the chloroplast. Its function is as follows. This protein binds to 23S rRNA. This Trieres chinensis (Marine centric diatom) protein is Large ribosomal subunit protein bL21c.